The following is a 358-amino-acid chain: Methylthioribose-1-phosphate isomerase (358 aa).

Residues 54–56 (RGA), Arg96, and Gln205 contribute to the substrate site. Asp246 acts as the Proton donor in catalysis. Residue 256 to 257 (NK) coordinates substrate.

Belongs to the eIF-2B alpha/beta/delta subunits family. MtnA subfamily.

It catalyses the reaction 5-(methylsulfanyl)-alpha-D-ribose 1-phosphate = 5-(methylsulfanyl)-D-ribulose 1-phosphate. Its pathway is amino-acid biosynthesis; L-methionine biosynthesis via salvage pathway; L-methionine from S-methyl-5-thio-alpha-D-ribose 1-phosphate: step 1/6. Functionally, catalyzes the interconversion of methylthioribose-1-phosphate (MTR-1-P) into methylthioribulose-1-phosphate (MTRu-1-P). This is Methylthioribose-1-phosphate isomerase from Stutzerimonas stutzeri (strain A1501) (Pseudomonas stutzeri).